Reading from the N-terminus, the 371-residue chain is Flagellar P-ring protein (371 aa).

The N-terminal stretch at 1–21 is a signal peptide; sequence MSRSFFATVLGLALAAMTVMA.

Belongs to the FlgI family. The basal body constitutes a major portion of the flagellar organelle and consists of four rings (L,P,S, and M) mounted on a central rod.

It localises to the periplasm. Its subcellular location is the bacterial flagellum basal body. In terms of biological role, assembles around the rod to form the L-ring and probably protects the motor/basal body from shearing forces during rotation. This is Flagellar P-ring protein from Caulobacter sp. (strain K31).